Here is a 490-residue protein sequence, read N- to C-terminus: Cytochrome P450 2C9 (490 aa).

Cysteine 435 contacts heme.

Belongs to the cytochrome P450 family. The cofactor is heme.

It localises to the endoplasmic reticulum membrane. Its subcellular location is the microsome membrane. It carries out the reaction an organic molecule + reduced [NADPH--hemoprotein reductase] + O2 = an alcohol + oxidized [NADPH--hemoprotein reductase] + H2O + H(+). The enzyme catalyses (5Z,8Z,11Z,14Z)-eicosatetraenoate + reduced [NADPH--hemoprotein reductase] + O2 = (8R,9S)-epoxy-(5Z,11Z,14Z)-eicosatrienoate + oxidized [NADPH--hemoprotein reductase] + H2O + H(+). It catalyses the reaction (5Z,8Z,11Z,14Z)-eicosatetraenoate + reduced [NADPH--hemoprotein reductase] + O2 = (8S,9R)-epoxy-(5Z,11Z,14Z)-eicosatrienoate + oxidized [NADPH--hemoprotein reductase] + H2O + H(+). The catalysed reaction is (5Z,8Z,11Z,14Z)-eicosatetraenoate + reduced [NADPH--hemoprotein reductase] + O2 = (11R,12S)-epoxy-(5Z,8Z,14Z)-eicosatrienoate + oxidized [NADPH--hemoprotein reductase] + H2O + H(+). It carries out the reaction (5Z,8Z,11Z,14Z)-eicosatetraenoate + reduced [NADPH--hemoprotein reductase] + O2 = (11S,12R)-epoxy-(5Z,8Z,14Z)-eicosatrienoate + oxidized [NADPH--hemoprotein reductase] + H2O + H(+). The enzyme catalyses (5Z,8Z,11Z,14Z)-eicosatetraenoate + reduced [NADPH--hemoprotein reductase] + O2 = (14R,15S)-epoxy-(5Z,8Z,11Z)-eicosatrienoate + oxidized [NADPH--hemoprotein reductase] + H2O + H(+). It catalyses the reaction (5Z,8Z,11Z,14Z)-eicosatetraenoate + reduced [NADPH--hemoprotein reductase] + O2 = (14S,15R)-epoxy-(5Z,8Z,11Z)-eicosatrienoate + oxidized [NADPH--hemoprotein reductase] + H2O + H(+). The catalysed reaction is (5Z,8Z,11Z,14Z,17Z)-eicosapentaenoate + reduced [NADPH--hemoprotein reductase] + O2 = 8,9-epoxy-(5Z,11Z,14Z,17Z)-eicosatetraenoate + oxidized [NADPH--hemoprotein reductase] + H2O + H(+). It carries out the reaction (5Z,8Z,11Z,14Z,17Z)-eicosapentaenoate + reduced [NADPH--hemoprotein reductase] + O2 = 11,12-epoxy-(5Z,8Z,14Z,17Z)-eicosatetraenoate + oxidized [NADPH--hemoprotein reductase] + H2O + H(+). The enzyme catalyses (5Z,8Z,11Z,14Z,17Z)-eicosapentaenoate + reduced [NADPH--hemoprotein reductase] + O2 = 14,15-epoxy-(5Z,8Z,11Z,17Z)-eicosatetraenoate + oxidized [NADPH--hemoprotein reductase] + H2O + H(+). It catalyses the reaction (5Z,8Z,11Z,14Z,17Z)-eicosapentaenoate + reduced [NADPH--hemoprotein reductase] + O2 = (17R,18S)-epoxy-(5Z,8Z,11Z,14Z)-eicosatetraenoate + oxidized [NADPH--hemoprotein reductase] + H2O + H(+). The catalysed reaction is cholesterol + reduced [NADPH--hemoprotein reductase] + O2 = 25-hydroxycholesterol + oxidized [NADPH--hemoprotein reductase] + H2O + H(+). It carries out the reaction 17beta-estradiol + reduced [NADPH--hemoprotein reductase] + O2 = 2-hydroxy-17beta-estradiol + oxidized [NADPH--hemoprotein reductase] + H2O + H(+). The enzyme catalyses estrone + reduced [NADPH--hemoprotein reductase] + O2 = 2-hydroxyestrone + oxidized [NADPH--hemoprotein reductase] + H2O + H(+). It catalyses the reaction (5Z,8Z,11Z,14Z)-eicosatetraenoate + reduced [NADPH--hemoprotein reductase] + O2 = (11R)-hydroxy-(5Z,8Z,12E,14Z)-eicosatetraenoate + oxidized [NADPH--hemoprotein reductase] + H2O + H(+). The catalysed reaction is (5Z,8Z,11Z,14Z)-eicosatetraenoate + reduced [NADPH--hemoprotein reductase] + O2 = (12R)-hydroxy-(5Z,8Z,10E,14Z)-eicosatetraenoate + oxidized [NADPH--hemoprotein reductase] + H2O + H(+). It carries out the reaction (5Z,8Z,11Z,14Z)-eicosatetraenoate + reduced [NADPH--hemoprotein reductase] + O2 = (15R)-hydroxy-(5Z,8Z,11Z,13E)-eicosatetraenoate + oxidized [NADPH--hemoprotein reductase] + H2O + H(+). The enzyme catalyses (5Z,8Z,11Z,14Z)-eicosatetraenoate + reduced [NADPH--hemoprotein reductase] + O2 = 10-hydroxy-(5Z,8Z,11Z,14Z)-eicosatetraenoate + oxidized [NADPH--hemoprotein reductase] + H2O + H(+). It catalyses the reaction (9Z,12Z)-octadecadienoate + reduced [NADPH--hemoprotein reductase] + O2 = (13R)-hydroxy-(9Z,11E)-octadecadienoate + oxidized [NADPH--hemoprotein reductase] + H2O + H(+). The catalysed reaction is (9Z,12Z)-octadecadienoate + reduced [NADPH--hemoprotein reductase] + O2 = (9R)-hydroxy-(10E,12Z)-octadecadienoate + oxidized [NADPH--hemoprotein reductase] + H2O + H(+). It carries out the reaction (5Z,8Z,11Z,14Z)-eicosatetraenoate + reduced [NADPH--hemoprotein reductase] + O2 = 19-hydroxy-(5Z,8Z,11Z,14Z)-eicosatetraenoate + oxidized [NADPH--hemoprotein reductase] + H2O + H(+). The enzyme catalyses (5Z,8Z,11Z,14Z)-eicosatetraenoate + reduced [NADPH--hemoprotein reductase] + O2 = 13(S)-hydroxy-(5Z,8Z,11Z,14Z)-eicosatetraenoate + oxidized [NADPH--hemoprotein reductase] + H2O + H(+). It catalyses the reaction (5Z,8Z,11Z,14Z)-eicosatetraenoate + reduced [NADPH--hemoprotein reductase] + O2 = 14,15-epoxy-(5Z,8Z,11Z)-eicosatrienoate + oxidized [NADPH--hemoprotein reductase] + H2O + H(+). The catalysed reaction is (5Z,8Z,11Z,14Z)-eicosatetraenoate + reduced [NADPH--hemoprotein reductase] + O2 = 11,12-epoxy-(5Z,8Z,14Z)-eicosatrienoate + oxidized [NADPH--hemoprotein reductase] + H2O + H(+). It carries out the reaction (5Z,8Z,11Z,14Z)-eicosatetraenoate + reduced [NADPH--hemoprotein reductase] + O2 = 13-hydroxy-(5Z,8Z,11Z,14Z)-eicosatetraenoate + oxidized [NADPH--hemoprotein reductase] + H2O + H(+). The enzyme catalyses (4R)-limonene + reduced [NADPH--hemoprotein reductase] + O2 = (1R,5S)-carveol + oxidized [NADPH--hemoprotein reductase] + H2O + H(+). It catalyses the reaction (4S)-limonene + reduced [NADPH--hemoprotein reductase] + O2 = (1S,5R)-carveol + oxidized [NADPH--hemoprotein reductase] + H2O + H(+). The catalysed reaction is (4S)-limonene + reduced [NADPH--hemoprotein reductase] + O2 = (4S)-perillyl alcohol + oxidized [NADPH--hemoprotein reductase] + H2O + H(+). It functions in the pathway lipid metabolism; arachidonate metabolism. The protein operates within steroid metabolism; cholesterol metabolism. It participates in terpene metabolism; (4R)-limonene degradation. Functionally, a cytochrome P450 monooxygenase involved in the metabolism of various endogenous substrates, including fatty acids and steroids. Mechanistically, uses molecular oxygen inserting one oxygen atom into a substrate, and reducing the second into a water molecule, with two electrons provided by NADPH via cytochrome P450 reductase (NADPH--hemoprotein reductase). Catalyzes the epoxidation of double bonds of polyunsaturated fatty acids (PUFA). Catalyzes the hydroxylation of carbon-hydrogen bonds. Metabolizes cholesterol toward 25-hydroxycholesterol, a physiological regulator of cellular cholesterol homeostasis. Exhibits low catalytic activity for the formation of catechol estrogens from 17beta-estradiol (E2) and estrone (E1), namely 2-hydroxy E1 and E2. Catalyzes bisallylic hydroxylation and hydroxylation with double-bond migration of polyunsaturated fatty acids (PUFA). Also metabolizes plant monoterpenes such as limonene. Oxygenates (R)- and (S)-limonene to produce carveol and perillyl alcohol. Contributes to the wide pharmacokinetics variability of the metabolism of drugs such as S-warfarin, diclofenac, phenytoin, tolbutamide and losartan. This Homo sapiens (Human) protein is Cytochrome P450 2C9.